The primary structure comprises 541 residues: Glucose-6-phosphate isomerase (541 aa).

The active-site Proton donor is the Glu346. Residues His377 and Lys506 contribute to the active site.

Belongs to the GPI family.

The protein localises to the cytoplasm. It catalyses the reaction alpha-D-glucose 6-phosphate = beta-D-fructose 6-phosphate. It participates in carbohydrate biosynthesis; gluconeogenesis. The protein operates within carbohydrate degradation; glycolysis; D-glyceraldehyde 3-phosphate and glycerone phosphate from D-glucose: step 2/4. Its function is as follows. Catalyzes the reversible isomerization of glucose-6-phosphate to fructose-6-phosphate. This is Glucose-6-phosphate isomerase from Rhizobium etli (strain CIAT 652).